Here is a 460-residue protein sequence, read N- to C-terminus: Argininosuccinate lyase (460 aa).

Belongs to the lyase 1 family. Argininosuccinate lyase subfamily.

It is found in the cytoplasm. It carries out the reaction 2-(N(omega)-L-arginino)succinate = fumarate + L-arginine. The protein operates within amino-acid biosynthesis; L-arginine biosynthesis; L-arginine from L-ornithine and carbamoyl phosphate: step 3/3. This chain is Argininosuccinate lyase, found in Staphylococcus haemolyticus (strain JCSC1435).